The chain runs to 102 residues: RNA-binding protein Hfq (102 aa).

The Sm domain occupies 9–68; it reads DPFVNALRRERVPVSIYLVNGIKLQGQIESFDQFVILLKNTVSQMVYKHAISTVVPSRPV. The tract at residues 63–102 is disordered; that stretch reads VPSRPVSHHSNNAGGGASNNYHHGSNAQGSTAQQDSEETE. Residues 70-88 show a composition bias toward low complexity; sequence HHSNNAGGGASNNYHHGSN.

This sequence belongs to the Hfq family. Homohexamer.

RNA chaperone that binds small regulatory RNA (sRNAs) and mRNAs to facilitate mRNA translational regulation in response to envelope stress, environmental stress and changes in metabolite concentrations. Also binds with high specificity to tRNAs. This is RNA-binding protein Hfq from Salmonella heidelberg (strain SL476).